We begin with the raw amino-acid sequence, 548 residues long: uncharacterized protein (548 aa).

Phosphoserine occurs at positions 19 and 25. Residue Thr-47 is modified to Phosphothreonine.

This is an uncharacterized protein from Schizosaccharomyces pombe (strain 972 / ATCC 24843) (Fission yeast).